The sequence spans 262 residues: Hemin import ATP-binding protein HmuV (262 aa).

An ABC transporter domain is found at 3–244 (LQARNLTLAR…DHMRRVYGIE (242 aa)). An ATP-binding site is contributed by 35–42 (GANGAGKS).

Belongs to the ABC transporter superfamily. Heme (hemin) importer (TC 3.A.1.14.5) family. In terms of assembly, the complex is composed of two ATP-binding proteins (HmuV), two transmembrane proteins (HmuU) and a solute-binding protein (HmuT).

Its subcellular location is the cell inner membrane. Part of the ABC transporter complex HmuTUV involved in hemin import. Responsible for energy coupling to the transport system. The protein is Hemin import ATP-binding protein HmuV of Bordetella bronchiseptica (strain ATCC BAA-588 / NCTC 13252 / RB50) (Alcaligenes bronchisepticus).